The chain runs to 508 residues: O-acetyltransferase pigM (508 aa).

The interval threonine 166 to threonine 188 is disordered.

Its pathway is secondary metabolite biosynthesis. In terms of biological role, O-acetyltransferase; part of the gene cluster that mediates the biosynthesis of azaphilone pigments (MonAzPs), a complex mixture of compounds with a common azaphilone skeleton very widely used as food colorants. PigM and pigO are involved in the elimination of the omega-1 alcohol with pigM acting as an O-acetyltransferase that synthesizes the O-11 acetyl intermediate whereas pigO eliminates acetic acid to yield an intermediate with a C10(11) double bond. The first step of the pathway is performed by the nrPKS pigA that forms the hexaketide precursor from successive condensations of five malonyl-CoA units, with a simple acetyl-CoA starter unit. The role of esterase pigG is not clear, but it may play at most a supplementary role in the formation of the benzaldehyde produced by the pigA nrPKS. This very reactive benzaldehyde is intercepted by the pigC ketoreductase that to provide the first stable enzyme-free MonAzPs intermediate, 6-(4-hydroxy-2-oxopentyl)-3-methyl-2,4-dioxocyclohexane carbaldehyde, also known as M7PKS-1. The FAD-dependent monooxygenase pigN hydroxylates M7PKS-1 at C-4, which triggers the formation of the pyran ring. PigJ, pigK and pigD are involved in the acetylation of the pyran ring. PigJ and pigK form the two subunits of a dedicated fungal FAS that produces the side chain fatty acyl moiety of MonAzPs and pigD transfers the fatty acyl chain to the C-4 alcohol. PigM and pigO are involved in the elimination of the omega-1 alcohol. PigM acts as an O-acetyltransferase that synthesizes the putative O-11 acetyl intermediate whereas pigO eliminates acetic acid to yield an intermediate with a C10(11) double bond. The dehydration of the C-11 alcohol followed by the reduction of the C6(7) double bond by the NAD(P)H-dependent oxidoreductase pigE increases the electrophilicity of the C-5 ketone of the resulting acyl benzopyran. This in turn sets up the C-5 ketone for an intramolecular Knoevenagel aldol condensation with the C-20 enol of the side chain. This condensation affords the characteristic linear tricyclic carbon skeletons of the yellow pigments that serve as the common precursors for the classical yellow pigments monascin and ankaflavin, orange pigments rubopunctatin and monascorubrin, and red pigments ribropunctamine and monascorubramine. The FAD-dependent oxidoreductase pigF is especially invoved in the biosynthesis of orange and red pigments via desaturation of C6(7). The chain is O-acetyltransferase pigM from Monascus ruber (Mold).